The primary structure comprises 479 residues: Caspase-8 (479 aa).

Residues 1 to 216 constitute a propeptide that is removed on maturation; that stretch reads MDFSRNLYDI…TISDSPREQD (216 aa). 2 consecutive DED domains span residues 2-80 and 100-177; these read DFSR…TYLN and AYRV…IIND. Residues Ser-188 and Ser-211 each carry the phosphoserine modification. At Lys-224 the chain carries N6-acetyllysine. Residue His-317 is part of the active site. The residue at position 334 (Tyr-334) is a Phosphotyrosine. The active site involves Cys-360. Positions 375 to 384 are excised as a propeptide; sequence SEEQPYLEMD. Phosphotyrosine; by SRC is present on Tyr-380. Ser-387 bears the Phosphoserine; by CDK1 mark. Residue Arg-413 is modified to (Microbial infection) ADP-riboxanated arginine.

This sequence belongs to the peptidase C14A family. Heterotetramer that consists of two anti-parallel arranged heterodimers, each one formed by a 18 kDa (p18) and a 10 kDa (p10) subunit. Component of the death-induced signaling complex (DISC) composed of cell surface receptor FAS/CD95 or TNFRSF1A, adapter protein FADD and the CASP8 protease; recruitment of CASP8 to the complex is required for processing of CASP8 into the p18 and p10 subunits. Component of the AIM2 PANoptosome complex, a multiprotein complex that drives inflammatory cell death (PANoptosis). Interacts with CFLAR and PEA15. Interacts with TNFAIP8L2. Interacts with CASP8AP2. Interacts with RFFL and RNF34; negatively regulate CASP8 through proteasomal degradation. Interacts with NOL3; decreases CASP8 activity in a mitochondria localization- and phosphorylation-dependent manner and this interaction is dissociated by calcium. Interacts with UBR2ca. Interacts with RIPK1. Interacts with stimulated TNFRSF10B; this interaction is followed by CASP8 proteolytic cleavage and activation. Interacts (phosphorylated on Tyr-380) with PIK3R1. As to quaternary structure, interacts at the endoplasmic reticulum with a complex containing BCAP31, BAP29, BCL2 and/or BCL2L1. In terms of assembly, (Microbial infection) Interacts with human cytomegalovirus/HHV-5 protein vICA/UL36; this interaction inhibits CASP8 activation. (Microbial infection) Interacts with NleF from pathogenic E.coli. As to quaternary structure, (Microbial infection) Interacts with molluscum contagiosum virus protein MC160. In terms of assembly, (Microbial infection) Interacts (via RIP homotypic interaction motif) with herpes simplex virus 1/HHV-1 protein RIR1/ICP6 (via RIP homotypic interaction motif); this interaction prevents necroptosis activation. (Microbial infection) Interacts (via RIP homotypic interaction motif) with herpes simplex virus 2/HHV-2 protein RIR1/ICP10 (via RIP homotypic interaction motif); this interaction prevents necroptosis activation. Post-translationally, generation of the p10 and p18 subunits requires association with the death-inducing signaling complex (DISC), whereas additional processing is likely due to the autocatalytic activity of the activated protease. GZMB and CASP10 can be involved in these processing events. In terms of processing, phosphorylation on Ser-387 during mitosis by CDK1 inhibits activation by proteolysis and prevents apoptosis. Phosphorylation on Tyr-380 by SRC is mediated by interaction with the SRC SH2 domain and does not affect dimerization or recruitment to the death-inducing signaling complex (DISC) but negatively regulates DISC-mediated processing and activation of CASP8, down-regulating its proapoptotic function. Phosphorylation on Tyr-380 also enhances localization to lamellipodia in migrating cells. (Microbial infection) ADP-riboxanation by C.violaceum CopC blocks CASP8 processing, preventing CASP8 activation and ability to mediate extrinsic apoptosis. Post-translationally, (Microbial infection) Proteolytically cleaved by the cowpox virus CRMA death inhibitory protein. In terms of tissue distribution, isoform 1, isoform 5 and isoform 7 are expressed in a wide variety of tissues. Highest expression in peripheral blood leukocytes, spleen, thymus and liver. Barely detectable in brain, testis and skeletal muscle.

The protein resides in the cytoplasm. It localises to the nucleus. It is found in the cell projection. The protein localises to the lamellipodium. The catalysed reaction is Strict requirement for Asp at position P1 and has a preferred cleavage sequence of (Leu/Asp/Val)-Glu-Thr-Asp-|-(Gly/Ser/Ala).. With respect to regulation, CASP8 activity is restricted by RIPK1. Inhibited by the effector protein NleF that is produced by pathogenic E.coli; this inhibits apoptosis. In terms of biological role, thiol protease that plays a key role in programmed cell death by acting as a molecular switch for apoptosis, necroptosis and pyroptosis, and is required to prevent tissue damage during embryonic development and adulthood. Initiator protease that induces extrinsic apoptosis by mediating cleavage and activation of effector caspases responsible for FAS/CD95-mediated and TNFRSF1A-induced cell death. Cleaves and activates effector caspases CASP3, CASP4, CASP6, CASP7, CASP9 and CASP10. Binding to the adapter molecule FADD recruits it to either receptor FAS/TNFRSF6 or TNFRSF1A. The resulting aggregate called the death-inducing signaling complex (DISC) performs CASP8 proteolytic activation. The active dimeric enzyme is then liberated from the DISC and free to activate downstream apoptotic proteases. Proteolytic fragments of the N-terminal propeptide (termed CAP3, CAP5 and CAP6) are likely retained in the DISC. In addition to extrinsic apoptosis, also acts as a negative regulator of necroptosis: acts by cleaving RIPK1 at 'Asp-324', which is crucial to inhibit RIPK1 kinase activity, limiting TNF-induced apoptosis, necroptosis and inflammatory response. Also able to initiate pyroptosis by mediating cleavage and activation of gasdermin-C and -D (GSDMC and GSDMD, respectively): gasdermin cleavage promotes release of the N-terminal moiety that binds to membranes and forms pores, triggering pyroptosis. Initiates pyroptosis following inactivation of MAP3K7/TAK1. Also acts as a regulator of innate immunity by mediating cleavage and inactivation of N4BP1 downstream of TLR3 or TLR4, thereby promoting cytokine production. May participate in the Granzyme B (GZMB) cell death pathways. Cleaves PARP1 and PARP2. Independent of its protease activity, promotes cell migration following phosphorylation at Tyr-380. Lacks the catalytic site and may interfere with the pro-apoptotic activity of the complex. Functionally, lacks the catalytic site and may interfere with the pro-apoptotic activity of the complex. Acts as an inhibitor of the caspase cascade. The sequence is that of Caspase-8 from Homo sapiens (Human).